The following is a 1318-amino-acid chain: Tetratricopeptide repeat protein 41 (1318 aa).

6 TPR repeats span residues 401-434 (PRLE…KPCI), 653-686 (WIQE…PVRE), 819-852 (GRII…LLQS), 860-893 (LRAQ…LLRF), 993-1029 (MEFL…KEKA), and 1047-1084 (SDTL…RAAH). The segment at 1295–1318 (KPGFPRRSQIESKLLKTSDDPNKE) is disordered. Residues 1302–1318 (SQIESKLLKTSDDPNKE) are compositionally biased toward basic and acidic residues.

In terms of tissue distribution, highly expressed in lung and myeloid leukemia cell line (at protein level). Isoform 4: expressed in heart (at protein level).

Its subcellular location is the cytoplasm. This Mus musculus (Mouse) protein is Tetratricopeptide repeat protein 41.